A 108-amino-acid polypeptide reads, in one-letter code: Transmembrane protein 265 (108 aa).

A run of 2 helical transmembrane segments spans residues 34–54 (AATS…VFAI) and 78–98 (LILA…LLLW).

It belongs to the CD225/Dispanin family.

It is found in the membrane. In Homo sapiens (Human), this protein is Transmembrane protein 265.